Here is a 126-residue protein sequence, read N- to C-terminus: C2H2-type zinc-finger transcription factor M5 (126 aa).

Disordered regions lie at residues A17–R52 and E103–D126. A compositionally biased stretch (polar residues) spans S38–D48. A C2H2-type 1; degenerate zinc finger spans residues N51–N76. The segment at F83–N115 adopts a C2H2-type 2; degenerate zinc-finger fold. The span at N115 to D126 shows a compositional bias: basic and acidic residues.

It belongs to the GLI C2H2-type zinc-finger protein family.

It localises to the nucleus. Transcription factor that probably regulates the expression of the gene cluster that mediates the biosynthesis of squalestatin S1 (SQS1, also known as zaragozic acid A), a heavily oxidized fungal polyketide that offers potent cholesterol lowering activity by targeting squalene synthase (SS). This Phoma sp. (strain ATCC 20986 / MF5453) protein is C2H2-type zinc-finger transcription factor M5.